A 74-amino-acid polypeptide reads, in one-letter code: DNA-directed RNA polymerase subunit omega (74 aa).

Belongs to the RNA polymerase subunit omega family. In terms of assembly, the RNAP catalytic core consists of 2 alpha, 1 beta, 1 beta' and 1 omega subunit. When a sigma factor is associated with the core the holoenzyme is formed, which can initiate transcription.

The catalysed reaction is RNA(n) + a ribonucleoside 5'-triphosphate = RNA(n+1) + diphosphate. Promotes RNA polymerase assembly. Latches the N- and C-terminal regions of the beta' subunit thereby facilitating its interaction with the beta and alpha subunits. The sequence is that of DNA-directed RNA polymerase subunit omega from Campylobacter jejuni subsp. jejuni serotype O:6 (strain 81116 / NCTC 11828).